We begin with the raw amino-acid sequence, 348 residues long: Fe-S cluster assembly protein DRE2 (348 aa).

The segment at 1-185 (MSGEKSSLLL…KKPESPRASV (185 aa)) is N-terminal SAM-like domain. Disordered regions lie at residues 128–148 (QTAP…SKSL) and 162–213 (KKAE…TASK). The segment at 186–241 (VAEDLDDGDELDGMNEDDSNSDELTASKSKFFDDVAGQDSADSIDEDDLVDDAEKS) is linker. Residues 188–206 (EDLDDGDELDGMNEDDSNS) show a composition bias toward acidic residues. [2Fe-2S] cluster contacts are provided by Cys-248, Cys-259, Cys-262, and Cys-264. A fe-S binding site A region spans residues 248 to 264 (CGKTKTRRRKACKDCTC). Residues Cys-311, Cys-314, Cys-322, and Cys-325 each coordinate [4Fe-4S] cluster. 2 consecutive short sequence motifs (cx2C motif) follow at residues 311 to 314 (CGSC) and 322 to 325 (CSGC). The segment at 311–325 (CGSCSLGDAFRCSGC) is fe-S binding site B.

It belongs to the anamorsin family. As to quaternary structure, monomer. Interacts with TAH18. Interacts with MIA40. Requires [2Fe-2S] cluster as cofactor. [4Fe-4S] cluster is required as a cofactor.

Its subcellular location is the cytoplasm. It is found in the mitochondrion intermembrane space. In terms of biological role, component of the cytosolic iron-sulfur (Fe-S) protein assembly (CIA) machinery required for the maturation of extramitochondrial Fe-S proteins. Part of an electron transfer chain functioning in an early step of cytosolic Fe-S biogenesis, facilitating the de novo assembly of a [4Fe-4S] cluster on the scaffold complex CFD1-NBP35. Electrons are transferred to DRE2 from NADPH via the FAD- and FMN-containing protein TAH18. TAH18-DRE2 are also required for the assembly of the diferric tyrosyl radical cofactor of ribonucleotide reductase (RNR), probably by providing electrons for reduction during radical cofactor maturation in the catalytic small subunit RNR2. The sequence is that of Fe-S cluster assembly protein DRE2 from Lachancea thermotolerans (strain ATCC 56472 / CBS 6340 / NRRL Y-8284) (Yeast).